The chain runs to 96 residues: Putative septation protein SpoVG (96 aa).

This sequence belongs to the SpoVG family.

Could be involved in septation. This is Putative septation protein SpoVG from Borrelia hermsii (strain HS1 / DAH).